Reading from the N-terminus, the 540-residue chain is Sterol O-acyltransferase 1 (540 aa).

The interval Met1–Gln20 is disordered. The Cytoplasmic portion of the chain corresponds to Met1 to Ile128. Ser2 is modified (phosphoserine). A cholesterol-binding site is contributed by His127. A helical membrane pass occupies residues Arg129–Asp150. Residues Tyr151–Lys170 are Lumenal-facing. Residues Phe171 to Trp196 form a helical membrane-spanning segment. At Ala197 to Ile208 the chain is on the cytoplasmic side. A helical membrane pass occupies residues Tyr209–Leu234. Residues Ala235–Ser242 lie on the Lumenal side of the membrane. Residues Arg243–Pro266 traverse the membrane as a helical segment. The Cytoplasmic segment spans residues Arg267 to Arg309. The chain crosses the membrane as a helical span at residues Trp310 to Ile342. The Lumenal portion of the chain corresponds to Lys343–Ser359. The helical transmembrane segment at Ile360–Met385 threads the bilayer. The Cytoplasmic portion of the chain corresponds to Leu386–Arg433. The short motif at Phe393 to Asn399 is the FYXDWWN motif element. Residues Asn405, Arg408, Asn411, His415, Tyr423, Lys435, and Ser446 each coordinate an acyl-CoA. The chain crosses the membrane as a helical span at residues Phe434–Leu458. Residue His450 is part of the active site. Over Ser459–Val464 the chain is Lumenal. The chain crosses the membrane as a helical span at residues Leu465–Val480. Residues Asn481–Arg486 are Cytoplasmic-facing. Residues Pro487 to Cys518 traverse the membrane as a helical segment. An intrachain disulfide couples Cys518 to Cys536. Topologically, residues Pro519–Phe540 are lumenal.

This sequence belongs to the membrane-bound acyltransferase family. Sterol o-acyltransferase subfamily. May form homo- or heterodimers. Interacts with UBIAD1.

It localises to the endoplasmic reticulum membrane. The enzyme catalyses a sterol + a long-chain fatty acyl-CoA = a long-chain 3-hydroxysterol ester + CoA. It carries out the reaction cholesterol + an acyl-CoA = a cholesterol ester + CoA. The catalysed reaction is cholesterol + (9Z)-octadecenoyl-CoA = cholesteryl (9Z-octadecenoate) + CoA. It catalyses the reaction cholesterol + hexadecanoyl-CoA = cholesteryl hexadecanoate + CoA. The enzyme catalyses octadecanoyl-CoA + cholesterol = cholesteryl octadecanoate + CoA. It carries out the reaction (9Z,12Z)-octadecadienoyl-CoA + cholesterol = cholesteryl (9Z,12Z)-octadecadienoate + CoA. The catalysed reaction is (5Z,8Z,11Z,14Z)-eicosatetraenoyl-CoA + cholesterol = cholesteryl (5Z,8Z,11Z,14Z)-eicosatetraenoate + CoA. It catalyses the reaction (9Z)-hexadecenoyl-CoA + cholesterol = cholesteryl (9Z)-hexadecenoate + CoA. The enzyme catalyses (11Z)-octadecenoyl-CoA + cholesterol = cholesteryl (11Z)-octadecenoate + CoA. It carries out the reaction (7Z)-octadecenoyl-CoA + cholesterol = cholesteryl (7Z)-octadecenoate + CoA. In terms of biological role, catalyzes the formation of fatty acid-cholesterol esters, which are less soluble in membranes than cholesterol. Plays a role in lipoprotein assembly and dietary cholesterol absorption. Preferentially utilizes oleoyl-CoA ((9Z)-octadecenoyl-CoA) as a substrate: shows a higher activity towards an acyl-CoA substrate with a double bond at the delta-9 position (9Z) than towards saturated acyl-CoA or an unsaturated acyl-CoA with a double bond at the delta-7 (7Z) or delta-11 (11Z) positions. This Mus musculus (Mouse) protein is Sterol O-acyltransferase 1.